Here is a 256-residue protein sequence, read N- to C-terminus: Enolase-phosphatase E1 (256 aa).

Positions 14 and 16 each coordinate Mg(2+). Substrate contacts are provided by residues 142–143 (SS) and Lys-176. Asp-201 serves as a coordination point for Mg(2+).

The protein belongs to the HAD-like hydrolase superfamily. MasA/MtnC family. In terms of assembly, monomer. It depends on Mg(2+) as a cofactor.

Its subcellular location is the cytoplasm. The protein resides in the nucleus. The enzyme catalyses 5-methylsulfanyl-2,3-dioxopentyl phosphate + H2O = 1,2-dihydroxy-5-(methylsulfanyl)pent-1-en-3-one + phosphate. It participates in amino-acid biosynthesis; L-methionine biosynthesis via salvage pathway; L-methionine from S-methyl-5-thio-alpha-D-ribose 1-phosphate: step 3/6. The protein operates within amino-acid biosynthesis; L-methionine biosynthesis via salvage pathway; L-methionine from S-methyl-5-thio-alpha-D-ribose 1-phosphate: step 4/6. Its function is as follows. Bifunctional enzyme that catalyzes the enolization of 2,3-diketo-5-methylthiopentyl-1-phosphate (DK-MTP-1-P) into the intermediate 2-hydroxy-3-keto-5-methylthiopentenyl-1-phosphate (HK-MTPenyl-1-P), which is then dephosphorylated to form the acireductone 1,2-dihydroxy-3-keto-5-methylthiopentene (DHK-MTPene). This Drosophila yakuba (Fruit fly) protein is Enolase-phosphatase E1.